A 102-amino-acid chain; its full sequence is MAKQKIRIRLKAYDHRILDQSAEKIVETAKRSGASVSGPIPLPTEKSIYTVLRAVHKYKDSREQFEMRTHKRLIDIVNPTPQTVDSLMRLDLPSGVDIEIKL.

This sequence belongs to the universal ribosomal protein uS10 family. Part of the 30S ribosomal subunit.

Its function is as follows. Involved in the binding of tRNA to the ribosomes. The polypeptide is Small ribosomal subunit protein uS10 (Listeria innocua serovar 6a (strain ATCC BAA-680 / CLIP 11262)).